Consider the following 388-residue polypeptide: Formate-dependent phosphoribosylglycinamide formyltransferase (388 aa).

N(1)-(5-phospho-beta-D-ribosyl)glycinamide-binding positions include 11–12 and glutamate 71; that span reads EL. Residues arginine 103, lysine 144, 149–154, 184–187, and glutamate 192 contribute to the ATP site; these read SSGKGQ and EEFI. The ATP-grasp domain maps to 108 to 300; that stretch reads DLAAKELGLK…EFELHLRAVL (193 aa). Mg(2+) contacts are provided by glutamate 257 and glutamate 270. N(1)-(5-phospho-beta-D-ribosyl)glycinamide is bound by residues aspartate 277, lysine 349, and 356–357; that span reads RR.

This sequence belongs to the PurK/PurT family. As to quaternary structure, homodimer.

It carries out the reaction N(1)-(5-phospho-beta-D-ribosyl)glycinamide + formate + ATP = N(2)-formyl-N(1)-(5-phospho-beta-D-ribosyl)glycinamide + ADP + phosphate + H(+). Its pathway is purine metabolism; IMP biosynthesis via de novo pathway; N(2)-formyl-N(1)-(5-phospho-D-ribosyl)glycinamide from N(1)-(5-phospho-D-ribosyl)glycinamide (formate route): step 1/1. Functionally, involved in the de novo purine biosynthesis. Catalyzes the transfer of formate to 5-phospho-ribosyl-glycinamide (GAR), producing 5-phospho-ribosyl-N-formylglycinamide (FGAR). Formate is provided by PurU via hydrolysis of 10-formyl-tetrahydrofolate. In Bacteroides fragilis (strain ATCC 25285 / DSM 2151 / CCUG 4856 / JCM 11019 / LMG 10263 / NCTC 9343 / Onslow / VPI 2553 / EN-2), this protein is Formate-dependent phosphoribosylglycinamide formyltransferase.